The sequence spans 309 residues: Malate dehydrogenase (309 aa).

Residues 7 to 12 and Asp32 contribute to the NAD(+) site; that span reads GAGHVG. Substrate is bound by residues Arg81 and Arg87. NAD(+) contacts are provided by residues Asn94 and 117–119; that span reads VSN. Residues Asn119 and Arg150 each contribute to the substrate site. His174 serves as the catalytic Proton acceptor.

The protein belongs to the LDH/MDH superfamily. MDH type 3 family.

It catalyses the reaction (S)-malate + NAD(+) = oxaloacetate + NADH + H(+). Functionally, catalyzes the reversible oxidation of malate to oxaloacetate. This Chlorobium phaeovibrioides (strain DSM 265 / 1930) (Prosthecochloris vibrioformis (strain DSM 265)) protein is Malate dehydrogenase.